The sequence spans 477 residues: Probable cytosolic Fe-S cluster assembly factor GL21135 (477 aa).

Cys23, Cys69, Cys72, Cys75, Cys188, Cys244, Cys396, and Cys400 together coordinate [4Fe-4S] cluster.

This sequence belongs to the NARF family.

In terms of biological role, component of the cytosolic iron-sulfur (Fe/S) protein assembly machinery. Required for maturation of extramitochondrial Fe/S proteins. This Drosophila persimilis (Fruit fly) protein is Probable cytosolic Fe-S cluster assembly factor GL21135.